A 600-amino-acid polypeptide reads, in one-letter code: Adenine deaminase 2 (600 aa).

It belongs to the metallo-dependent hydrolases superfamily. Adenine deaminase family. Mn(2+) is required as a cofactor.

It carries out the reaction adenine + H2O + H(+) = hypoxanthine + NH4(+). This is Adenine deaminase 2 from Bradyrhizobium sp. (strain ORS 278).